The primary structure comprises 367 residues: MHNYNIFLSFYNYISSGVLLFLKIIIVIISVMVSVAYLVYMERKVIAAIQLRQGPSVVGPFGLLQPFADAIKLIIKEPIIPFKANKLCFLIAPVITFTLALLGWAVIPFGSYIIVDNGQELIVPNVIANINIGVLYILAISSLGVYGIIIAGWSSNSNYAFLGAIRSASQMISYEVSIGLTIVTVLLATGSLKLGEIVIARHNMPYWIDLLLLPMAFMFFISALAETNRHPFDLPEAESELVSGYNVEYSSMPFALFFLGEYANMILMSAMAVIFFFGGWYPPLNVSFLYIIPGTIWFIFKIVILLFCFIWIRASIPRYRYDQLMRLGWKVFLPISLFWVILVSGILVYTDSLPKNTLNNTVYYKEN.

A run of 8 helical transmembrane segments spans residues 18 to 38 (VLLFLKIIIVIISVMVSVAYL), 87 to 107 (LCFLIAPVITFTLALLGWAVI), 132 to 152 (IGVLYILAISSLGVYGIIIAG), 180 to 200 (LTIVTVLLATGSLKLGEIVIA), 204 to 224 (MPYWIDLLLLPMAFMFFISAL), 257 to 277 (FFLGEYANMILMSAMAVIFFF), 291 to 311 (IIPGTIWFIFKIVILLFCFIW), and 328 to 348 (GWKVFLPISLFWVILVSGILV).

The protein belongs to the complex I subunit 1 family. NDH-1 is composed of 14 different subunits. Subunits NuoA, H, J, K, L, M, N constitute the membrane sector of the complex.

The protein resides in the cell inner membrane. The catalysed reaction is a quinone + NADH + 5 H(+)(in) = a quinol + NAD(+) + 4 H(+)(out). Functionally, NDH-1 shuttles electrons from NADH, via FMN and iron-sulfur (Fe-S) centers, to quinones in the respiratory chain. The immediate electron acceptor for the enzyme in this species is believed to be ubiquinone. Couples the redox reaction to proton translocation (for every two electrons transferred, four hydrogen ions are translocated across the cytoplasmic membrane), and thus conserves the redox energy in a proton gradient. This subunit may bind ubiquinone. This Ehrlichia ruminantium (strain Gardel) protein is NADH-quinone oxidoreductase subunit H.